Consider the following 517-residue polypeptide: Methionine aminopeptidase 1b (517 aa).

The tract at residues 74–94 is disordered; the sequence is YCNKENSNNNNNNNNNNNNNL. Over residues 79–94 the composition is skewed to low complexity; sequence NSNNNNNNNNNNNNNL. Residues 114–166 form a C6H2-type zinc finger; that stretch reads ENLCSGCKKVLIKKLSCPICLKNKIFSYFCNQECFKGSWKEHQKIHENMNKEN. Residues cysteine 117, cysteine 120, cysteine 130, cysteine 133, cysteine 143, cysteine 147, histidine 155, and histidine 159 each coordinate Zn(2+). A protein is bound at residue histidine 325. 3 residues coordinate Zn(2+): aspartate 342, aspartate 353, and histidine 419. An a protein-binding site is contributed by histidine 426. Glutamate 452 and glutamate 483 together coordinate Zn(2+).

It belongs to the peptidase M24A family. Methionine aminopeptidase type 1 subfamily. Associates with the 60S ribosomal subunit of the 80S translational complex. The cofactor is Zn(2+). Co(2+) serves as cofactor. It depends on Mn(2+) as a cofactor. Fe(2+) is required as a cofactor.

It localises to the cytoplasm. It carries out the reaction Release of N-terminal amino acids, preferentially methionine, from peptides and arylamides.. Inhibited by pyrimidine derivative XC11. Functionally, cotranslationally removes the N-terminal methionine from nascent proteins. The N-terminal methionine is often cleaved when the second residue in the primary sequence is small and uncharged (Met-Ala-, Cys, Gly, Pro, Ser, Thr, or Val). May play an important role in parasite growth during the blood asexual stage. The chain is Methionine aminopeptidase 1b from Plasmodium falciparum (isolate 3D7).